A 1094-amino-acid polypeptide reads, in one-letter code: Probable serine/threonine-protein kinase kinX (1094 aa).

In terms of domain architecture, Protein kinase spans 22–281 (LDFISEIGSG…QTLKQIKTTL (260 aa)). ATP is bound by residues 28–36 (IGSGGFGKV) and K49. D146 serves as the catalytic Proton acceptor. Disordered regions lie at residues 301 to 884 (TTNG…SVED) and 946 to 1083 (IKVE…PNNK). Residues 330-344 (YDDDDDDDDDDDDND) show a composition bias toward acidic residues. Polar residues predominate over residues 351–373 (SDNSNSNVTLESNSNYNSSTING). Residues 374-387 (QEQQEQQEQQQQQQ) are compositionally biased toward low complexity. The segment covering 393–408 (DEGEIEQDDDNIEVYD) has biased composition (acidic residues). Positions 410–424 (DYQKKLEEHQKELLE) are enriched in basic and acidic residues. Composition is skewed to acidic residues over residues 433–454 (STDE…EEEQ), 480–496 (DDED…EGDE), and 503–523 (DFDE…DEDE). Composition is skewed to low complexity over residues 526–542 (IQYY…LQKQ) and 564–585 (RQLQ…QHQQ). Over residues 587–602 (YDDDDDDDDEEEEEYD) the composition is skewed to acidic residues. Positions 603–639 (DVIRHDTDSEEESKDKTPLPWDQHFEKQKESENKVEQ) are enriched in basic and acidic residues. Over residues 650 to 661 (QETEQQQQQQQQ) the composition is skewed to low complexity. A compositionally biased stretch (basic and acidic residues) spans 670 to 801 (PTKVEDVKVE…EPVEEVKVEE (132 aa)). The 40 X 9 AA approximate repeats of V-K-V-E-E-P-V-E-E stretch occupies residues 676 to 978 (VKVETEEQTK…PVKVEVASPV (303 aa)). Positions 802–816 (PVEEVEAEESVQEPV) are enriched in acidic residues. Composition is skewed to basic and acidic residues over residues 817-884 (EEVK…SVED) and 946-971 (IKVE…EPVK). Low complexity-rich tracts occupy residues 972–985 (VEVA…QPPQ) and 992–1011 (VVST…SNSP). Over residues 1016–1031 (VKQPQQQEIEVNSTPI) the composition is skewed to polar residues. Over residues 1032 to 1050 (KQQQQQQQTPTQQTQTPTK) the composition is skewed to low complexity.

It belongs to the protein kinase superfamily. TKL Ser/Thr protein kinase family.

It catalyses the reaction L-seryl-[protein] + ATP = O-phospho-L-seryl-[protein] + ADP + H(+). The catalysed reaction is L-threonyl-[protein] + ATP = O-phospho-L-threonyl-[protein] + ADP + H(+). This Dictyostelium discoideum (Social amoeba) protein is Probable serine/threonine-protein kinase kinX (kinX).